Here is a 607-residue protein sequence, read N- to C-terminus: MSNFDPKHFLLHCARKPGVYRMLDAEGGVLYVGKARNLQARLNSYFQKNVASVKTRALVGRIRDIQTTVTGSEVEALLLEQSLIKELKPPYNILLRDDKSYPYIRITRSDRFPRVTFHRGTRRAGSQYFGPYPSGSAVREALSLIEKIFQVRNCSDSYFRNRTRPCLQHQINRCTAPCVGLVSEEDYARQVTMAADFLDGRSREVADQLSTDMEAAAAALEFEKAALLRDQLAAIQAVQQKQYAETGQGDLDVVAIETRHGLAIIEVLMIRDGRILGHRTFRPDTRGEDDRSEILEAFLSQYYLGDREDPVKPQEILLCMEIPGAEALQQALEEQWAKKVRLAWRVRSDRAAWISMAQTNAQQSMATEMAAREHMEARFLALETLLESSEPIRRIECFDISHTQGEKAVASCVVFDQQGARKQDYRYFNVNPAAGGDDYEALEEAIRRRYQRVLKEQGRMPDLLLIDGGKGQMQRGWKVVQELDLHASIRVMGIGKGPSRRPGFEALYLPCGKEMIPGPADSALHLLQQVRDEAHRFALTGHRARRGKARKQSTLDEIPGIGPKRRKALLTHFGGLKQMRNASASEFARVPGINSQMAQTLYDWFHR.

Residues Arg-15 to Ile-93 enclose the GIY-YIG domain. The UVR domain maps to Arg-203 to Val-238. The span at His-542–Lys-551 shows a compositional bias: basic residues. The interval His-542–Ile-561 is disordered.

Belongs to the UvrC family. Interacts with UvrB in an incision complex.

The protein localises to the cytoplasm. Its function is as follows. The UvrABC repair system catalyzes the recognition and processing of DNA lesions. UvrC both incises the 5' and 3' sides of the lesion. The N-terminal half is responsible for the 3' incision and the C-terminal half is responsible for the 5' incision. The sequence is that of UvrABC system protein C from Alcanivorax borkumensis (strain ATCC 700651 / DSM 11573 / NCIMB 13689 / SK2).